The sequence spans 124 residues: Urease subunit beta (124 aa).

The protein belongs to the urease beta subunit family. Heterotrimer of UreA (gamma), UreB (beta) and UreC (alpha) subunits. Three heterotrimers associate to form the active enzyme.

The protein resides in the cytoplasm. The enzyme catalyses urea + 2 H2O + H(+) = hydrogencarbonate + 2 NH4(+). Its pathway is nitrogen metabolism; urea degradation; CO(2) and NH(3) from urea (urease route): step 1/1. This chain is Urease subunit beta, found in Bacillus subtilis (strain 168).